We begin with the raw amino-acid sequence, 525 residues long: Tigger transposable element-derived protein 2 (525 aa).

The region spanning 1 to 52 (MLGKRKRVVLTIKDKLDIIKKLEEGNSFKKLSVLYGIGESTVRDIKKNKERI) is the HTH psq-type domain. 2 DNA-binding regions (H-T-H motif) span residues 28-48 (FKKL…IKKN) and 100-132 (TICA…FKQR). In terms of domain architecture, HTH CENPB-type spans 67–139 (KRKSMKSSTY…KQRHGIPKAA (73 aa)). Positions 168–385 (LLPEQIYGAD…IRSNTITRAW (218 aa)) constitute a DDE-1 domain.

This sequence belongs to the tigger transposable element derived protein family.

It is found in the nucleus. The polypeptide is Tigger transposable element-derived protein 2 (Tigd2) (Mus musculus (Mouse)).